Reading from the N-terminus, the 76-residue chain is Conotoxin Im6.9 (76 aa).

The first 19 residues, 1–19 (MEKLTILLLVTAVLMSTQA), serve as a signal peptide directing secretion. A propeptide spanning residues 20–45 (LMQSGIEKRQRAKIKFFSKRKTTAER) is cleaved from the precursor. 3 disulfide bridges follow: Cys51/Cys65, Cys58/Cys69, and Cys64/Cys73.

Belongs to the conotoxin O2 superfamily. In terms of tissue distribution, expressed by the venom duct.

It localises to the secreted. Functionally, probable neurotoxin. The protein is Conotoxin Im6.9 of Conus imperialis (Imperial cone).